The sequence spans 640 residues: 1-deoxy-D-xylulose-5-phosphate synthase (640 aa).

Thiamine diphosphate-binding positions include His-79 and 120–122 (GHS). Residue Asp-151 participates in Mg(2+) binding. Thiamine diphosphate contacts are provided by residues 152–153 (GA), Asn-180, Tyr-287, and Glu-369. Position 180 (Asn-180) interacts with Mg(2+).

Belongs to the transketolase family. DXPS subfamily. As to quaternary structure, homodimer. Requires Mg(2+) as cofactor. It depends on thiamine diphosphate as a cofactor.

The catalysed reaction is D-glyceraldehyde 3-phosphate + pyruvate + H(+) = 1-deoxy-D-xylulose 5-phosphate + CO2. It functions in the pathway metabolic intermediate biosynthesis; 1-deoxy-D-xylulose 5-phosphate biosynthesis; 1-deoxy-D-xylulose 5-phosphate from D-glyceraldehyde 3-phosphate and pyruvate: step 1/1. Catalyzes the acyloin condensation reaction between C atoms 2 and 3 of pyruvate and glyceraldehyde 3-phosphate to yield 1-deoxy-D-xylulose-5-phosphate (DXP). In Thioalkalivibrio sulfidiphilus (strain HL-EbGR7), this protein is 1-deoxy-D-xylulose-5-phosphate synthase.